A 424-amino-acid polypeptide reads, in one-letter code: UDP-N-acetylglucosamine 1-carboxyvinyltransferase (424 aa).

22–23 is a phosphoenolpyruvate binding site; sequence KN. UDP-N-acetyl-alpha-D-glucosamine is bound at residue R98. C122 serves as the catalytic Proton donor. C122 is modified (2-(S-cysteinyl)pyruvic acid O-phosphothioketal). UDP-N-acetyl-alpha-D-glucosamine contacts are provided by residues 127–131, D312, and I334; that span reads RPVDQ.

Belongs to the EPSP synthase family. MurA subfamily.

The protein localises to the cytoplasm. The catalysed reaction is phosphoenolpyruvate + UDP-N-acetyl-alpha-D-glucosamine = UDP-N-acetyl-3-O-(1-carboxyvinyl)-alpha-D-glucosamine + phosphate. It participates in cell wall biogenesis; peptidoglycan biosynthesis. In terms of biological role, cell wall formation. Adds enolpyruvyl to UDP-N-acetylglucosamine. This chain is UDP-N-acetylglucosamine 1-carboxyvinyltransferase, found in Xanthomonas campestris pv. campestris (strain B100).